A 373-amino-acid chain; its full sequence is Glutamate 5-kinase (373 aa).

Residue Lys15 coordinates ATP. Ser55, Asp142, and Asn154 together coordinate substrate. ATP-binding positions include Thr174–Asp175 and Thr216–Lys222. The PUA domain maps to Ala281 to Arg359.

The protein belongs to the glutamate 5-kinase family.

Its subcellular location is the cytoplasm. It carries out the reaction L-glutamate + ATP = L-glutamyl 5-phosphate + ADP. It functions in the pathway amino-acid biosynthesis; L-proline biosynthesis; L-glutamate 5-semialdehyde from L-glutamate: step 1/2. Catalyzes the transfer of a phosphate group to glutamate to form L-glutamate 5-phosphate. This chain is Glutamate 5-kinase, found in Citrifermentans bemidjiense (strain ATCC BAA-1014 / DSM 16622 / JCM 12645 / Bem) (Geobacter bemidjiensis).